The chain runs to 334 residues: Glyceraldehyde-3-phosphate dehydrogenase (334 aa).

NAD(+)-binding positions include 12–13 (TI) and Gly111. Residue 140-142 (SCN) coordinates D-glyceraldehyde 3-phosphate. Residue Cys141 is the Nucleophile of the active site. Arg167 contributes to the NAD(+) binding site. D-glyceraldehyde 3-phosphate is bound at residue 192–193 (HG). An NAD(+)-binding site is contributed by Gln298.

It belongs to the glyceraldehyde-3-phosphate dehydrogenase family. Homotetramer.

It is found in the cytoplasm. It catalyses the reaction D-glyceraldehyde 3-phosphate + phosphate + NADP(+) = (2R)-3-phospho-glyceroyl phosphate + NADPH + H(+). The catalysed reaction is D-glyceraldehyde 3-phosphate + phosphate + NAD(+) = (2R)-3-phospho-glyceroyl phosphate + NADH + H(+). It functions in the pathway carbohydrate degradation; glycolysis; pyruvate from D-glyceraldehyde 3-phosphate: step 1/5. The protein is Glyceraldehyde-3-phosphate dehydrogenase of Thermococcus sibiricus (strain DSM 12597 / MM 739).